The following is a 212-amino-acid chain: MSVGILGTKLGMTQVFDEAGRAIPVTVVQAGPCPVTQIKTAQTDGYTAIQIGYGSTTEKALTRPELGHLKKSGSTPVRHLQEYRLADVSEYELGQSISADLFSEGQLVDISGTSIGRGFAGYQKRHNFRRGPMGHGSKNHRAPGSTGAGTTPGRIYPGKRMAGQMGNVKKTIRKLTVVRVDAERNVLLIKGSVPGKPGALLNIQPATIVGES.

Residues 129 to 156 (RRGPMGHGSKNHRAPGSTGAGTTPGRIY) are disordered. Residues 142–153 (APGSTGAGTTPG) are compositionally biased toward low complexity.

This sequence belongs to the universal ribosomal protein uL3 family. Part of the 50S ribosomal subunit. Forms a cluster with proteins L14 and L19.

In terms of biological role, one of the primary rRNA binding proteins, it binds directly near the 3'-end of the 23S rRNA, where it nucleates assembly of the 50S subunit. This Acaryochloris marina (strain MBIC 11017) protein is Large ribosomal subunit protein uL3.